The primary structure comprises 288 residues: Polyamine aminopropyltransferase (288 aa).

Residues Ile-11–Lys-245 enclose the PABS domain. Gln-36 is an S-methyl-5'-thioadenosine binding site. Residues His-67 and Asp-91 each coordinate spermidine. S-methyl-5'-thioadenosine-binding positions include Glu-111 and Asp-148–Gly-149. Asp-166 serves as the catalytic Proton acceptor. Position 166–169 (Asp-166–Asp-169) interacts with spermidine. Pro-173 contacts S-methyl-5'-thioadenosine.

It belongs to the spermidine/spermine synthase family. Homodimer or homotetramer.

The protein localises to the cytoplasm. It catalyses the reaction S-adenosyl 3-(methylsulfanyl)propylamine + agmatine = N(1)-(3-aminopropyl)agmatine + S-methyl-5'-thioadenosine + H(+). The catalysed reaction is S-adenosyl 3-(methylsulfanyl)propylamine + putrescine = S-methyl-5'-thioadenosine + spermidine + H(+). It carries out the reaction cadaverine + S-adenosyl 3-(methylsulfanyl)propylamine = aminopropylcadaverine + S-methyl-5'-thioadenosine + H(+). It functions in the pathway amine and polyamine biosynthesis; spermidine biosynthesis; spermidine from putrescine: step 1/1. In terms of biological role, involved in the biosynthesis of polyamines which are thought to support the growth of thermophilic microorganisms under high-temperature conditions. It seems that long-chain and branched-chain of polyamines effectively stabilize DNA and RNA, respectively. Catalyzes the irreversible transfer of a propylamine group from the amino donor S-adenosylmethioninamine (decarboxy-AdoMet) to agmatine to yield N1-aminopropylagmatine. It can also use cadaverine (1,5-diaminopentane) and putrescine (1,4-diaminobutane) as substrate with a lower activity than that of agmatine. The reaction involves a nucleophilic attack on the C-3 methylene of the propylamine moiety adjacent to the positively charged sulfur of decarboxy-AdoMet. The protein is Polyamine aminopropyltransferase of Thermococcus kodakarensis (strain ATCC BAA-918 / JCM 12380 / KOD1) (Pyrococcus kodakaraensis (strain KOD1)).